A 295-amino-acid polypeptide reads, in one-letter code: 3-methyl-2-oxobutanoate hydroxymethyltransferase (295 aa).

The interval 1-30 is disordered; the sequence is MTSGRAMSPEETAPYGTGPARAESAPDAPA. Mg(2+)-binding residues include Asp76 and Asp115. 3-methyl-2-oxobutanoate-binding positions include 76–77, Asp115, and Lys145; that span reads DS. Mg(2+) is bound at residue Glu147. The Proton acceptor role is filled by Glu213.

It belongs to the PanB family. Homodecamer; pentamer of dimers. Mg(2+) serves as cofactor.

Its subcellular location is the cytoplasm. It carries out the reaction 3-methyl-2-oxobutanoate + (6R)-5,10-methylene-5,6,7,8-tetrahydrofolate + H2O = 2-dehydropantoate + (6S)-5,6,7,8-tetrahydrofolate. The protein operates within cofactor biosynthesis; (R)-pantothenate biosynthesis; (R)-pantoate from 3-methyl-2-oxobutanoate: step 1/2. Functionally, catalyzes the reversible reaction in which hydroxymethyl group from 5,10-methylenetetrahydrofolate is transferred onto alpha-ketoisovalerate to form ketopantoate. The polypeptide is 3-methyl-2-oxobutanoate hydroxymethyltransferase (Nocardioides sp. (strain ATCC BAA-499 / JS614)).